Here is a 300-residue protein sequence, read N- to C-terminus: Ribosomal protein L11 methyltransferase (300 aa).

Positions 152, 173, 195, and 234 each coordinate S-adenosyl-L-methionine.

Belongs to the methyltransferase superfamily. PrmA family.

It is found in the cytoplasm. The catalysed reaction is L-lysyl-[protein] + 3 S-adenosyl-L-methionine = N(6),N(6),N(6)-trimethyl-L-lysyl-[protein] + 3 S-adenosyl-L-homocysteine + 3 H(+). Functionally, methylates ribosomal protein L11. This chain is Ribosomal protein L11 methyltransferase, found in Burkholderia cenocepacia (strain ATCC BAA-245 / DSM 16553 / LMG 16656 / NCTC 13227 / J2315 / CF5610) (Burkholderia cepacia (strain J2315)).